We begin with the raw amino-acid sequence, 457 residues long: tRNA-2-methylthio-N(6)-dimethylallyladenosine synthase (457 aa).

Positions 3 to 120 (KKVYVKTFGC…LPQMIDARRE (118 aa)) constitute an MTTase N-terminal domain. Residues Cys-12, Cys-49, Cys-83, Cys-157, Cys-161, and Cys-164 each coordinate [4Fe-4S] cluster. Residues 143–377 (RVEGPSAFVS…QATIEENVAR (235 aa)) form the Radical SAM core domain. In terms of domain architecture, TRAM spans 380 to 447 (QSMLGKVERI…PHSLRGELVL (68 aa)).

Belongs to the methylthiotransferase family. MiaB subfamily. Monomer. It depends on [4Fe-4S] cluster as a cofactor.

It is found in the cytoplasm. The enzyme catalyses N(6)-dimethylallyladenosine(37) in tRNA + (sulfur carrier)-SH + AH2 + 2 S-adenosyl-L-methionine = 2-methylsulfanyl-N(6)-dimethylallyladenosine(37) in tRNA + (sulfur carrier)-H + 5'-deoxyadenosine + L-methionine + A + S-adenosyl-L-homocysteine + 2 H(+). Catalyzes the methylthiolation of N6-(dimethylallyl)adenosine (i(6)A), leading to the formation of 2-methylthio-N6-(dimethylallyl)adenosine (ms(2)i(6)A) at position 37 in tRNAs that read codons beginning with uridine. The sequence is that of tRNA-2-methylthio-N(6)-dimethylallyladenosine synthase from Burkholderia pseudomallei (strain 1710b).